The following is a 119-amino-acid chain: MAKVSQSIIKALEEEQMKQDLPEFAPGDTVVVNVKVKEGNRERLQAFEGVVIRVRNRGLHSAFTVRKVSNGEGVERTFQTHSPLVDSIKVKRRGAVRRAKLYYLRERSGKSARIREKLS.

This sequence belongs to the bacterial ribosomal protein bL19 family.

Its function is as follows. This protein is located at the 30S-50S ribosomal subunit interface and may play a role in the structure and function of the aminoacyl-tRNA binding site. The protein is Large ribosomal subunit protein bL19 of Idiomarina loihiensis (strain ATCC BAA-735 / DSM 15497 / L2-TR).